A 264-amino-acid chain; its full sequence is Tryptophan synthase alpha chain (264 aa).

Residues Glu49 and Asp60 each act as proton acceptor in the active site.

Belongs to the TrpA family. Tetramer of two alpha and two beta chains.

The catalysed reaction is (1S,2R)-1-C-(indol-3-yl)glycerol 3-phosphate + L-serine = D-glyceraldehyde 3-phosphate + L-tryptophan + H2O. Its pathway is amino-acid biosynthesis; L-tryptophan biosynthesis; L-tryptophan from chorismate: step 5/5. Its function is as follows. The alpha subunit is responsible for the aldol cleavage of indoleglycerol phosphate to indole and glyceraldehyde 3-phosphate. The protein is Tryptophan synthase alpha chain of Synechocystis sp. (strain ATCC 27184 / PCC 6803 / Kazusa).